Reading from the N-terminus, the 495-residue chain is 3-octaprenyl-4-hydroxybenzoate carboxy-lyase (495 aa).

Residue asparagine 172 coordinates Mn(2+). Prenylated FMN is bound by residues isoleucine 175–arginine 177, arginine 189–leucine 191, and arginine 194–glycine 195. Mn(2+) is bound at residue glutamate 238. Aspartate 287 functions as the Proton donor in the catalytic mechanism.

Belongs to the UbiD family. As to quaternary structure, homohexamer. Requires prenylated FMN as cofactor. It depends on Mn(2+) as a cofactor.

It localises to the cell membrane. It catalyses the reaction a 4-hydroxy-3-(all-trans-polyprenyl)benzoate + H(+) = a 2-(all-trans-polyprenyl)phenol + CO2. Its pathway is cofactor biosynthesis; ubiquinone biosynthesis. Its function is as follows. Catalyzes the decarboxylation of 3-octaprenyl-4-hydroxy benzoate to 2-octaprenylphenol, an intermediate step in ubiquinone biosynthesis. This is 3-octaprenyl-4-hydroxybenzoate carboxy-lyase from Marinobacter nauticus (strain ATCC 700491 / DSM 11845 / VT8) (Marinobacter aquaeolei).